The primary structure comprises 271 residues: Inactive phospholipid phosphatase 7 (271 aa).

The interval 1 to 66 (MPASQSRARA…RERRQSQQLP (66 aa)) is disordered. The Cytoplasmic segment spans residues 1–112 (MPASQSRARA…AASWASARSM (112 aa)). 2 positions are modified to phosphoserine: Ser43 and Ser62. The segment at 70–91 (CMQLNPSFKGIAFNSLLAIDIC) is interaction with MTOR. Residues 113–133 (VKLIGITGHGIPWIGGTILCL) traverse the membrane as a helical segment. Residues 134-141 (VKSSTLAG) lie on the Extracellular side of the membrane. A helical transmembrane segment spans residues 142 to 162 (QEVLMNLLLALLLDIMTVAGV). Topologically, residues 163-202 (QKLIKRRGPYETSPSLLDYLTMDIYAFPAGHASRAAMVSK) are cytoplasmic. Residues 203 to 223 (FFLSHLVLAVPLRVLLVLWAL) traverse the membrane as a helical segment. Over 224-239 (CVGLSRVMIGRHHVTD) the chain is Extracellular. Residues 240–260 (VLSGFVIGYLQFRLVELVWMP) traverse the membrane as a helical segment. The Cytoplasmic segment spans residues 261–271 (SSTCQMLISAW).

It belongs to the PA-phosphatase related phosphoesterase family. As to quaternary structure, homo and heterooligomer. Interacts with MTOR; controls MTOR-dependent IGF2 expression during myoblast differentiation.

The protein resides in the nucleus envelope. The protein localises to the endoplasmic reticulum membrane. Its subcellular location is the membrane. Functionally, plays a role as negative regulator of myoblast differentiation, in part through effects on MTOR signaling. Has no detectable enzymatic activity. In Homo sapiens (Human), this protein is Inactive phospholipid phosphatase 7.